A 344-amino-acid polypeptide reads, in one-letter code: KRR1 small subunit processome component homolog (344 aa).

A KH domain is found at 126-194 (DIIKIGNLVH…VRDIVLDTMN (69 aa)). The span at 230–246 (KNKNISKRKQPKNKKPK) shows a compositional bias: basic residues. Positions 230–326 (KNKNISKRKQ…KRAAEDNKVD (97 aa)) are disordered. Residues 271–344 (FLNKEQKQAK…MKANKKKERS (74 aa)) adopt a coiled-coil conformation. A compositionally biased stretch (basic and acidic residues) spans 272 to 303 (LNKEQKQAKRQQERTAKQAEAAKKQDERRNKD).

This sequence belongs to the KRR1 family. In terms of assembly, monomer. Component of the ribosomal small subunit (SSU) processome.

The protein localises to the nucleus. The protein resides in the nucleolus. Its function is as follows. Required for 40S ribosome biogenesis. Involved in nucleolar processing of pre-18S ribosomal RNA and ribosome assembly. Binds to RNA. Required for female germline development, cell viability during eye development and for survival of dividing cells and epithelial cells during early wing disk development. The chain is KRR1 small subunit processome component homolog from Drosophila mojavensis (Fruit fly).